Reading from the N-terminus, the 206-residue chain is ATP-dependent Clp protease proteolytic subunit 1 (206 aa).

S103 acts as the Nucleophile in catalysis. The active site involves H128.

This sequence belongs to the peptidase S14 family. Fourteen ClpP subunits assemble into 2 heptameric rings which stack back to back to give a disk-like structure with a central cavity, resembling the structure of eukaryotic proteasomes.

It localises to the cytoplasm. It catalyses the reaction Hydrolysis of proteins to small peptides in the presence of ATP and magnesium. alpha-casein is the usual test substrate. In the absence of ATP, only oligopeptides shorter than five residues are hydrolyzed (such as succinyl-Leu-Tyr-|-NHMec, and Leu-Tyr-Leu-|-Tyr-Trp, in which cleavage of the -Tyr-|-Leu- and -Tyr-|-Trp bonds also occurs).. In terms of biological role, cleaves peptides in various proteins in a process that requires ATP hydrolysis. Has a chymotrypsin-like activity. Plays a major role in the degradation of misfolded proteins. In Protochlamydia amoebophila (strain UWE25), this protein is ATP-dependent Clp protease proteolytic subunit 1.